The sequence spans 427 residues: MPALVLIGAQWGDEGKGKATDLLGGAVDYVVRYQGGNNAGHTVVIGAESYALHLIPSGVLRTDCVPVIGNGVVIDPGVLLSEMDGLQARGVDVSRLLISADAHLIMPHHRALDRVTERYLGKARIGTTGRGIGPAYGDKVARTGIRVQDLLDPGIFRQKLELALREKNQVLTKVYNRRRIEVDEVVEEYAAYAERLTPHIADTGLLLDTALREGKVVLLEGSQGTLLDVDHGTYPFVTSSNPTAGYAATGAGIGPTRINRVIGIIKAYTTRVGAGPFPTELDDKVGEELRRIGGEFGVTTGRARRTGWFDAVIARYAVRVNGLTDLFLTKLDVLSGFDTVPVCVGYEINGQRTDEMPMTQTEFHHAKPIYVELPGWHEDISGVTRFADLPEAAQAYVATLEEMAGAPVSAVGVGPGRAQTLVINELI.

Residues 12–18 and 40–42 each bind GTP; these read GDEGKGK and GHT. Residue aspartate 13 is the Proton acceptor of the active site. Aspartate 13 and glycine 40 together coordinate Mg(2+). Residues 13–16, 38–41, threonine 128, arginine 142, glutamine 223, threonine 238, and arginine 302 each bind IMP; these read DEGK and NAGH. Catalysis depends on histidine 41, which acts as the Proton donor. 298-304 lines the substrate pocket; that stretch reads VTTGRAR. Residues arginine 304, 330–332, and 412–414 contribute to the GTP site; these read KLD and GVG.

The protein belongs to the adenylosuccinate synthetase family. As to quaternary structure, homodimer. It depends on Mg(2+) as a cofactor.

The protein resides in the cytoplasm. It catalyses the reaction IMP + L-aspartate + GTP = N(6)-(1,2-dicarboxyethyl)-AMP + GDP + phosphate + 2 H(+). It functions in the pathway purine metabolism; AMP biosynthesis via de novo pathway; AMP from IMP: step 1/2. Its function is as follows. Plays an important role in the de novo pathway of purine nucleotide biosynthesis. Catalyzes the first committed step in the biosynthesis of AMP from IMP. The sequence is that of Adenylosuccinate synthetase from Parafrankia sp. (strain EAN1pec).